The primary structure comprises 388 residues: Chaperone protein DnaJ (388 aa).

The 66-residue stretch at 6–71 (DYYEILGVPR…EKRKLYDQFG (66 aa)) folds into the J domain. Residues 147 to 229 (GCEKEIPIYR…CGGTGNVRRQ (83 aa)) form a CR-type zinc finger. The Zn(2+) site is built by Cys-160, Cys-163, Cys-177, Cys-180, Cys-203, Cys-206, Cys-217, and Cys-220. CXXCXGXG motif repeat units follow at residues 160-167 (CSVCGGSG), 177-184 (CQKCGGTG), 203-210 (CDACGGTG), and 217-224 (CRECGGTG).

It belongs to the DnaJ family. Homodimer. It depends on Zn(2+) as a cofactor.

The protein localises to the cytoplasm. Its function is as follows. Participates actively in the response to hyperosmotic and heat shock by preventing the aggregation of stress-denatured proteins and by disaggregating proteins, also in an autonomous, DnaK-independent fashion. Unfolded proteins bind initially to DnaJ; upon interaction with the DnaJ-bound protein, DnaK hydrolyzes its bound ATP, resulting in the formation of a stable complex. GrpE releases ADP from DnaK; ATP binding to DnaK triggers the release of the substrate protein, thus completing the reaction cycle. Several rounds of ATP-dependent interactions between DnaJ, DnaK and GrpE are required for fully efficient folding. Also involved, together with DnaK and GrpE, in the DNA replication of plasmids through activation of initiation proteins. In Caldicellulosiruptor bescii (strain ATCC BAA-1888 / DSM 6725 / KCTC 15123 / Z-1320) (Anaerocellum thermophilum), this protein is Chaperone protein DnaJ.